The primary structure comprises 161 residues: Prs ADP-ribosylating toxin (161 aa).

It belongs to the MbcT/ParT/Res family. In terms of assembly, homodimer, forms heterotetrameric ParS(2)-ParT(2) complexes. In terms of processing, consumes NAD(+) and auto-ADP-ribosylates on the tryptic fragment Ala-47-Arg-66 in vitro. Also auto-ADP-ribosylates using NADP(+).

Its function is as follows. Toxic component of a type II toxin-antitoxin (TA) system. Expression in E.coli inhibits cell growth; bacteriostasis is neutralized by expression of cognate antitoxin ParS. ADP-ribosylates E.coli ribose-phosphate pyrophosphokinase (RPPK, prs) using NAD(+) in vitro; ADP-ribosylates RPPK on 'Lys-182' and 'Ser-202'. Cannot use NADP(+). Also auto-ADP-ribosylates in vitro; in the presence of RPPK auto-ADP-ribosylation decreases. The protein is Prs ADP-ribosylating toxin of Sphingobium sp. (strain YBL2).